The sequence spans 420 residues: Arginine biosynthesis bifunctional protein ArgJ (420 aa).

Substrate-binding residues include Thr-167, Lys-193, Thr-204, Glu-284, Asn-415, and Thr-420. The active-site Nucleophile is Thr-204.

This sequence belongs to the ArgJ family. Heterotetramer of two alpha and two beta chains.

The protein resides in the cytoplasm. The catalysed reaction is N(2)-acetyl-L-ornithine + L-glutamate = N-acetyl-L-glutamate + L-ornithine. The enzyme catalyses L-glutamate + acetyl-CoA = N-acetyl-L-glutamate + CoA + H(+). It participates in amino-acid biosynthesis; L-arginine biosynthesis; L-ornithine and N-acetyl-L-glutamate from L-glutamate and N(2)-acetyl-L-ornithine (cyclic): step 1/1. It functions in the pathway amino-acid biosynthesis; L-arginine biosynthesis; N(2)-acetyl-L-ornithine from L-glutamate: step 1/4. Its function is as follows. Catalyzes two activities which are involved in the cyclic version of arginine biosynthesis: the synthesis of N-acetylglutamate from glutamate and acetyl-CoA as the acetyl donor, and of ornithine by transacetylation between N(2)-acetylornithine and glutamate. This Prochlorococcus marinus (strain NATL2A) protein is Arginine biosynthesis bifunctional protein ArgJ.